We begin with the raw amino-acid sequence, 325 residues long: UPF0285 protein MmarC6_0247 (325 aa).

It belongs to the UPF0285 family.

This chain is UPF0285 protein MmarC6_0247, found in Methanococcus maripaludis (strain C6 / ATCC BAA-1332).